The sequence spans 492 residues: 2-succinylbenzoate--CoA ligase (492 aa).

This sequence belongs to the ATP-dependent AMP-binding enzyme family. MenE subfamily.

The catalysed reaction is 2-succinylbenzoate + ATP + CoA = 2-succinylbenzoyl-CoA + AMP + diphosphate. It functions in the pathway quinol/quinone metabolism; 1,4-dihydroxy-2-naphthoate biosynthesis; 1,4-dihydroxy-2-naphthoate from chorismate: step 5/7. It participates in quinol/quinone metabolism; menaquinone biosynthesis. Functionally, converts 2-succinylbenzoate (OSB) to 2-succinylbenzoyl-CoA (OSB-CoA). This Staphylococcus aureus (strain USA300 / TCH1516) protein is 2-succinylbenzoate--CoA ligase.